The chain runs to 107 residues: Quaternary ammonium compound-resistance protein QacH (107 aa).

A run of 4 helical transmembrane segments spans residues 1–21, 26–46, 57–77, and 84–104; these read MPYLYLLLSIVSEVIGSAFLK, FSKLYPTITTIISFLICFYFL, ITYASWAGLGLVLTTIVSVLI, and LISIISIILIIFGVVLLNTFG.

This sequence belongs to the drug/metabolite transporter (DMT) superfamily. Small multidrug resistance (SMR) (TC 2.A.7.1) family.

The protein localises to the cell membrane. In terms of biological role, multidrug exporter. Is implicated for the resistance to bacteriocidal quaternary ammonium compounds. The polypeptide is Quaternary ammonium compound-resistance protein QacH (qacH) (Staphylococcus saprophyticus).